A 415-amino-acid chain; its full sequence is Maintenance of mitochondrial morphology protein 1 (415 aa).

Topologically, residues 1 to 18 (MADICPSRSEPTLSFTQG) are lumenal. The chain crosses the membrane as a helical span at residues 19-39 (LILGQLSVVLLLAAFIKFFIF). Over 40–415 (GDPPSPEVVA…MPGSMPGSMP (376 aa)) the chain is Cytoplasmic. One can recognise an SMP-LTD domain in the interval 114–330 (QPESLDWFNV…EPRFQEIALP (217 aa)). Basic and acidic residues predominate over residues 373-389 (IEAEAHGGADRVPDSLR). Residues 373–415 (IEAEAHGGADRVPDSLRYRHRPRADEEFPGAGSMPGSMPGSMP) are disordered. A compositionally biased stretch (low complexity) spans 404-415 (GSMPGSMPGSMP).

This sequence belongs to the MMM1 family. In terms of assembly, homodimer. Component of the ER-mitochondria encounter structure (ERMES) or MDM complex, composed of mmm-1, mdm10, mdm12 and mdm34. A mmm-1 homodimer associates with one molecule of mdm12 on each side in a pairwise head-to-tail manner, and the SMP-LTD domains of mmm-1 and mdm12 generate a continuous hydrophobic tunnel for phospholipid trafficking.

The protein localises to the endoplasmic reticulum membrane. Component of the ERMES/MDM complex, which serves as a molecular tether to connect the endoplasmic reticulum (ER) and mitochondria. Components of this complex are involved in the control of mitochondrial shape and protein biogenesis, and function in nonvesicular lipid trafficking between the ER and mitochondria. The mdm12-mmm-1 subcomplex functions in the major beta-barrel assembly pathway that is responsible for biogenesis of all outer membrane beta-barrel proteins, and acts in a late step after the SAM complex. The mdm10-mdm12-mmm-1 subcomplex further acts in the TOM40-specific pathway after the action of the mdm12-mmm-1 complex. Essential for establishing and maintaining the structure of mitochondria and maintenance of mtDNA nucleoids. The polypeptide is Maintenance of mitochondrial morphology protein 1 (mmm-1) (Neurospora crassa (strain ATCC 24698 / 74-OR23-1A / CBS 708.71 / DSM 1257 / FGSC 987)).